The chain runs to 352 residues: Cysteinyl leukotriene receptor 1 (352 aa).

At 1-43 (MYLQGTKQTFLENMNGTENLTTSLINNTCHDTIDEFRNQVYST) the chain is on the extracellular side. Asn15, Asn19, and Asn26 each carry an N-linked (GlcNAc...) asparagine glycan. Residues 44-64 (MYSVISVVGFFGNSFVLYVLI) form a helical membrane-spanning segment. Residues 65 to 72 (KTYHEKSA) lie on the Cytoplasmic side of the membrane. Residues 73–93 (FQVYMINLAIADLLCVCTLPL) form a helical membrane-spanning segment. Topologically, residues 94–121 (RVVYYVHKGKWLFGDFLCRLTTYALYVN) are extracellular. A disulfide bridge connects residues Cys111 and Cys188. Residues 122–142 (LYCSIFFMTAMSFFRCVAIVF) traverse the membrane as a helical segment. Residues 143–156 (PVQNINLVTQKKAR) lie on the Cytoplasmic side of the membrane. The helical transmembrane segment at 157-177 (FVCIGIWIFVILTSSPFLMYK) threads the bilayer. The Extracellular segment spans residues 178–208 (SYQDEKNNTKCFEPPQNNQAKKYVLILHYVS). An N-linked (GlcNAc...) asparagine glycan is attached at Asn184. A helical membrane pass occupies residues 209–229 (LFFGFIIPFVTIIVCYTMIIL). Residues 230 to 245 (TLLKNTMKKNMPSRRK) lie on the Cytoplasmic side of the membrane. A helical transmembrane segment spans residues 246–266 (AIGMIIVVTAAFLVSFMPYHI). At 267 to 291 (QRTIHLHLLHSETRPCDSVLRMQKS) the chain is on the extracellular side. Residues 292–312 (VVITLSLAASNCCFDPLLYFF) traverse the membrane as a helical segment. At 313–352 (SGGNFRRRLSTFRKHSLSSMTYVPKKKASLPEKGEEICNE) the chain is on the cytoplasmic side.

It belongs to the G-protein coupled receptor 1 family. Widely expressed, with higher expression in the lung and skin, intermediate levels in the heart, kidney and stomach and lower levels in several other tissues. Isoform 1 is the most abundant form in all tested tissues.

It is found in the cell membrane. Functionally, receptor for cysteinyl leukotrienes mediating constriction of the microvascular smooth muscle during an inflammatory response. This response is mediated via a G-protein that activates a phosphatidylinositol-calcium second messenger system. The rank order of affinities for the leukotrienes is LTD4 &gt;&gt; LTE4 = LTC4 &gt;&gt; LTB4. This chain is Cysteinyl leukotriene receptor 1 (Cysltr1), found in Mus musculus (Mouse).